The sequence spans 141 residues: ATP synthase F(0) complex subunit C2, mitochondrial (141 aa).

The N-terminal 66 residues, methionine 1–arginine 66, are a transit peptide targeting the mitochondrion. Residues valine 82 to tyrosine 102 traverse the membrane as a helical segment. An N6,N6,N6-trimethyllysine modification is found at lysine 109. A helical membrane pass occupies residues isoleucine 117–isoleucine 137.

This sequence belongs to the ATPase C chain family. F-type ATPases have 2 components, CF(1) - the catalytic core - and CF(0) - the membrane proton channel. CF(1) has five subunits: alpha(3), beta(3), gamma(1), delta(1), epsilon(1). CF(0) has three main subunits: a, b and c. Interacts with DNAJC30; interaction is direct. Post-translationally, trimethylated by ATPSCKMT at Lys-109. Methylation is required for proper incorporation of the C subunit into the ATP synthase complex and mitochondrial respiration.

It localises to the mitochondrion membrane. Functionally, mitochondrial membrane ATP synthase (F(1)F(0) ATP synthase or Complex V) produces ATP from ADP in the presence of a proton gradient across the membrane which is generated by electron transport complexes of the respiratory chain. F-type ATPases consist of two structural domains, F(1) - containing the extramembraneous catalytic core and F(0) - containing the membrane proton channel, linked together by a central stalk and a peripheral stalk. During catalysis, ATP synthesis in the catalytic domain of F(1) is coupled via a rotary mechanism of the central stalk subunits to proton translocation. Part of the complex F(0) domain. A homomeric c-ring of probably 10 subunits is part of the complex rotary element. The protein is ATP synthase F(0) complex subunit C2, mitochondrial of Rattus norvegicus (Rat).